Consider the following 373-residue polypeptide: MTVAINNETVVLTPNEDDVQVNKGKTLETSFPPLKGDDLKWFPRSSLPAEIPAIDIGKVSTKEELEQFLVDIRKSGLFYIVNHGVPEEVSINVYNAFREFISTTTEEERMKYYTDTHFQNGGYVPFQGSSIRGGNLGKPQKDHVVKYFWRGPEVINRTPNEKFTEAHNMHHTETFKVAEKVIRTIFKALKLRFPDFDPMEFENTINSKKMFFTNRIYPQAEPSDEEEITHRLVPHLDTSFITLANQVPADNGFQGLFVETGDGKKVKVPGIRNSYLVFIGQSLSYLTKNYLPSALHGVDKPPSDLFEGSERSSLITFYEPAEIIIPSKNINPNPEETSESCPFFYDIGLTVNDPEGTTWDFVKNKFITGYYAD.

One can recognise a Fe2OG dioxygenase domain in the interval 204-320; it reads TINSKKMFFT…RSSLITFYEP (117 aa). The Fe cation site is built by H235, D237, and H296. R311 is a 2-oxoglutarate binding site.

The protein belongs to the iron/ascorbate-dependent oxidoreductase family. The cofactor is Fe(2+).

The enzyme catalyses N-(7'-carboxy-7'-demethylgeranyl)-L-glutamate + 2-oxoglutarate + O2 = isodomoate A + succinate + CO2 + H2O. The catalysed reaction is N-geranyl-L-glutamate + 2-oxoglutarate + O2 = dainate A + succinate + CO2 + H2O. Its pathway is secondary metabolite biosynthesis. Iron/ascorbate-dependent oxidoreductase: part of the gene cluster that mediates the biosynthesis of domoic acid (DA) and derivatives, natural products with neurochemical activity acting as ionotropic glutamate receptor (iGluR) agonists, thus being neurotoxins causing amnesic shellfish poisoning (ASP). Catalyzes the conversion of 7'-N-carboxy-L-geranyl-L-glutamic acid (cNGG) to isodomoic acid-A. Also mediates the conversion of N-geranyl-L-glutamic acid (L-NGG) to dainic acid A. The sequence is that of Alpha-ketoglutarate dependent kainoid synthase from Pseudo-nitzschia multiseries (Marine planktonic diatom).